We begin with the raw amino-acid sequence, 496 residues long: Thiamine transporter 2 (496 aa).

The Cytoplasmic portion of the chain corresponds to 1–7; the sequence is MDCYRTS. A helical membrane pass occupies residues 8 to 28; sequence LSSSWIYPTVILCLFGFFSMM. The Extracellular segment spans residues 29–53; the sequence is RPSEPFLIPYLSGPDKNLTSAEITN. Asn-45 carries N-linked (GlcNAc...) asparagine glycosylation. Residues 54–74 traverse the membrane as a helical segment; sequence EIFPVWTYSYLVLLLPVFVLT. Residues 75 to 81 lie on the Cytoplasmic side of the membrane; it reads DYVRYKP. Residues 82-102 traverse the membrane as a helical segment; it reads VIILQGISFIITWLLLLFGQG. Topologically, residues 103-110 are extracellular; sequence VKTMQVVE. The chain crosses the membrane as a helical span at residues 111-131; it reads FFYGMVTAAEVAYYAYIYSVV. Residues 132 to 144 lie on the Cytoplasmic side of the membrane; it reads SPEHYQRVSGYCR. A helical transmembrane segment spans residues 145–165; the sequence is SVTLAAYTAGSVLAQLLVSLA. Asn-166 carries an N-linked (GlcNAc...) asparagine glycan. The Extracellular portion of the chain corresponds to 166 to 169; the sequence is NMSY. A helical transmembrane segment spans residues 170–190; the sequence is FYLNVISLASVSVAFLFSLFL. The Cytoplasmic portion of the chain corresponds to 191 to 282; it reads PMPKKSMFFH…YSSKRLFYWS (92 aa). The helical transmembrane segment at 283 to 303 threads the bilayer; sequence LWWAFATAGFNQVLNYVQILW. The Extracellular segment spans residues 304–316; that stretch reads DYKAPSQDSSIYN. The chain crosses the membrane as a helical span at residues 317–337; that stretch reads GAVEAIATFGGAVAAFAVGYV. At 338 to 342 the chain is on the cytoplasmic side; sequence KVNWD. A helical transmembrane segment spans residues 343 to 363; that stretch reads LLGELALVVFSVVNAGSLFLM. Residues 364–375 lie on the Extracellular side of the membrane; it reads HYTANIWACYAG. Residues 376–396 form a helical membrane-spanning segment; it reads YLIFKSSYMLLITIAVFQIAV. The Cytoplasmic segment spans residues 397-405; the sequence is NLNVERYAL. The helical transmembrane segment at 406–426 threads the bilayer; sequence VFGINTFIALVIQTIMTVIVV. At 427-434 the chain is on the extracellular side; sequence DQRGLNLP. The chain crosses the membrane as a helical span at residues 435–455; sequence VSIQFLVYGSYFAVIAGIFLM. Topologically, residues 456–496 are cytoplasmic; it reads RSMYITYSTKSQKDVQSPAPSENPDVSHPEEESNIIMSTKL. The disordered stretch occupies residues 468–496; that stretch reads KDVQSPAPSENPDVSHPEEESNIIMSTKL.

This sequence belongs to the reduced folate carrier (RFC) transporter (TC 2.A.48) family. As to expression, widely expressed but most abundant in placenta, kidney and liver.

It is found in the membrane. The catalysed reaction is thiamine(out) + H(+)(in) = thiamine(in) + H(+)(out). It catalyses the reaction pyridoxine(out) + n H(+)(out) = pyridoxine(in) + n H(+)(in). Its activity is regulated as follows. Pyridoxine transport is inhibited by carbonyl cyanide p-trifluoromethoxyphenylhydrazone (FCCP) and carbonyl cyanide m-chlorophenylhydrazone (CCCP). In terms of biological role, mediates high affinity thiamine uptake, probably via a proton anti-port mechanism. Has no folate transport activity. Mediates H(+)-dependent pyridoxine transport. This is Thiamine transporter 2 (SLC19A3) from Homo sapiens (Human).